We begin with the raw amino-acid sequence, 90 residues long: DNA-directed RNA polymerase subunit omega (90 aa).

It belongs to the RNA polymerase subunit omega family. In terms of assembly, the RNAP catalytic core consists of 2 alpha, 1 beta, 1 beta' and 1 omega subunit. When a sigma factor is associated with the core the holoenzyme is formed, which can initiate transcription.

The catalysed reaction is RNA(n) + a ribonucleoside 5'-triphosphate = RNA(n+1) + diphosphate. In terms of biological role, promotes RNA polymerase assembly. Latches the N- and C-terminal regions of the beta' subunit thereby facilitating its interaction with the beta and alpha subunits. This chain is DNA-directed RNA polymerase subunit omega, found in Streptomyces griseus subsp. griseus (strain JCM 4626 / CBS 651.72 / NBRC 13350 / KCC S-0626 / ISP 5235).